Consider the following 734-residue polypeptide: MESIYKYGWIIPLLPLVSSITIGLGLFFFPKATKSLRRTYAIISTLLLSIAMFISFDLLWQQIAGSPTYRYLWSWIPDQDVTLEVGYPIDPLTSIMLVLVTTIGVTVMIHSDSYMSHDQGYVRFFAYLSLSTASMLGLVISPNLIQIYIFRELVGMCSYLLIGFWFTRPSAANACQKAFITNRVGDFGLLLGTSGFYWITGSFKFEDLFERFNESLANHEVSLFLATPCALLFPLGPVAKSAQFPLHVWLPDAMEGPTPISAPIHAATMVAAGIFLVARMFPLFQTLPLVMSSISWVGGVTASLGATVALAQKDLKRVLAYSTMSQLGYMMLALGIGSYRAASFHLITHAYPKALSSPGSGSVIHSMEPIVGYCPDKSQNIALMGGLRKYVPITGTTFLLGTLSLCGIPPLACFWSKDEIIADSWLYFPILGWIARFTAGLTGFYTFRMYSLTLEGDFRANPSKNLISSYVSPWENSRFGTSSQKQTDSALPLAQNRIESFDPSENIQEFSDKNVKNSVSTQSSREEYSPHPKESDNTMLFPLLILTIPTLLVGFIGVPSYQEEMGPDLLSHWLDPSLSLSNQINYENWLLEFIANATVSVGTASLGIFTASILYGPIPFFPRDLRQKTDLQLEGILGHFSSLLYNWSYSRGYIDGYYNIVFIKGTRILAKIISFFDQWIIDGIVNGVGISGSFGGEGSRYGEGGRISYYLFGFISGTIILLLVVINYKHDFFP.

The next 12 helical transmembrane spans lie at 9–29 (WIIP…LFFF), 40–60 (YAII…DLLW), 89–109 (IDPL…TVMI), 121–140 (YVRF…GLVI), 144–166 (LIQI…GFWF), 185–205 (GDFG…SFKF), 219–239 (HEVS…GPVA), 258–278 (TPIS…FLVA), 289–311 (LVMS…VALA), 318–338 (VLAY…GIGS), 395–415 (GTTF…ACFW), and 425–445 (WLYF…TGFY). Residues 512-534 (DKNVKNSVSTQSSREEYSPHPKE) are disordered. Residues 524–534 (SREEYSPHPKE) are compositionally biased toward basic and acidic residues. 3 consecutive transmembrane segments (helical) span residues 539-559 (MLFP…IGVP), 601-621 (VGTA…IPFF), and 707-727 (ISYY…VVIN).

This sequence belongs to the complex I subunit 5 family. NDH is composed of at least 16 different subunits, 5 of which are encoded in the nucleus.

The protein resides in the plastid. Its subcellular location is the chloroplast thylakoid membrane. The enzyme catalyses a plastoquinone + NADH + (n+1) H(+)(in) = a plastoquinol + NAD(+) + n H(+)(out). It carries out the reaction a plastoquinone + NADPH + (n+1) H(+)(in) = a plastoquinol + NADP(+) + n H(+)(out). In terms of biological role, NDH shuttles electrons from NAD(P)H:plastoquinone, via FMN and iron-sulfur (Fe-S) centers, to quinones in the photosynthetic chain and possibly in a chloroplast respiratory chain. The immediate electron acceptor for the enzyme in this species is believed to be plastoquinone. Couples the redox reaction to proton translocation, and thus conserves the redox energy in a proton gradient. The polypeptide is NAD(P)H-quinone oxidoreductase subunit 5, chloroplastic (ndhF) (Huperzia lucidula (Shining clubmoss)).